Here is a 40-residue protein sequence, read N- to C-terminus: Sulfur globule protein TR2 (40 aa).

To C.vinosum CV3. As to quaternary structure, the protein envelope of the sulfur globules is composed of the three different proteins TR0, TR1 and TR2.

In terms of biological role, structural protein of the sulfur globules, which are intracellular globules that serve for sulfur storage in purple sulfur bacteria. The sequence is that of Sulfur globule protein TR2 from Thiocapsa roseopersicina.